The following is a 330-amino-acid chain: Phosphate acyltransferase (330 aa).

This sequence belongs to the PlsX family. Homodimer. Probably interacts with PlsY.

It localises to the cytoplasm. It carries out the reaction a fatty acyl-[ACP] + phosphate = an acyl phosphate + holo-[ACP]. Its pathway is lipid metabolism; phospholipid metabolism. Catalyzes the reversible formation of acyl-phosphate (acyl-PO(4)) from acyl-[acyl-carrier-protein] (acyl-ACP). This enzyme utilizes acyl-ACP as fatty acyl donor, but not acyl-CoA. This chain is Phosphate acyltransferase, found in Streptococcus pneumoniae (strain P1031).